Reading from the N-terminus, the 140-residue chain is Translation initiation factor 2 subunit beta (140 aa).

This sequence belongs to the eIF-2-beta/eIF-5 family. In terms of assembly, heterotrimer composed of an alpha, a beta and a gamma chain.

In terms of biological role, eIF-2 functions in the early steps of protein synthesis by forming a ternary complex with GTP and initiator tRNA. The sequence is that of Translation initiation factor 2 subunit beta (eif2b) from Pyrococcus horikoshii (strain ATCC 700860 / DSM 12428 / JCM 9974 / NBRC 100139 / OT-3).